Reading from the N-terminus, the 261-residue chain is Cytochrome c oxidase subunit 3 (261 aa).

Residues 1 to 15 are Mitochondrial matrix-facing; that stretch reads MTHQTHAYHMVNPSP. The helical transmembrane segment at 16–34 threads the bilayer; sequence WPLTGALSALLMTSGLIMW. Over 35–40 the chain is Mitochondrial intermembrane; the sequence is FHFNSV. A helical transmembrane segment spans residues 41 to 66; that stretch reads ALLTLGLTTNMLTMYQWWRDVIREST. The Mitochondrial matrix portion of the chain corresponds to 67–72; it reads FQGHHT. A helical transmembrane segment spans residues 73-105; sequence PNVQKGLRYGMILFIISEVLFFTGFFWAFYHSS. Residues 106 to 128 lie on the Mitochondrial intermembrane side of the membrane; that stretch reads LAPTPELGGCWPPTGIHPLNPLE. A helical membrane pass occupies residues 129–152; sequence VPLLNTSVLLASGVSITWAHHSLM. The Mitochondrial matrix segment spans residues 153–155; it reads EGN. Residues 156-183 traverse the membrane as a helical segment; it reads RNHMLQALFITIALGVYFTLLQASEYYE. The Mitochondrial intermembrane segment spans residues 184-190; the sequence is APFTISD. A helical membrane pass occupies residues 191-223; it reads GVYGSTFFVATGFHGLHVIIGSTFLIVCFFRQL. Over 224–232 the chain is Mitochondrial matrix; the sequence is KFHFTSSHH. The helical transmembrane segment at 233-256 threads the bilayer; sequence FGFEAAAWYWHFVDVVWLFLYVSI. Topologically, residues 257–261 are mitochondrial intermembrane; it reads YWWGS.

This sequence belongs to the cytochrome c oxidase subunit 3 family. As to quaternary structure, component of the cytochrome c oxidase (complex IV, CIV), a multisubunit enzyme composed of 14 subunits. The complex is composed of a catalytic core of 3 subunits MT-CO1, MT-CO2 and MT-CO3, encoded in the mitochondrial DNA, and 11 supernumerary subunits COX4I, COX5A, COX5B, COX6A, COX6B, COX6C, COX7A, COX7B, COX7C, COX8 and NDUFA4, which are encoded in the nuclear genome. The complex exists as a monomer or a dimer and forms supercomplexes (SCs) in the inner mitochondrial membrane with NADH-ubiquinone oxidoreductase (complex I, CI) and ubiquinol-cytochrome c oxidoreductase (cytochrome b-c1 complex, complex III, CIII), resulting in different assemblies (supercomplex SCI(1)III(2)IV(1) and megacomplex MCI(2)III(2)IV(2)).

It localises to the mitochondrion inner membrane. The enzyme catalyses 4 Fe(II)-[cytochrome c] + O2 + 8 H(+)(in) = 4 Fe(III)-[cytochrome c] + 2 H2O + 4 H(+)(out). Functionally, component of the cytochrome c oxidase, the last enzyme in the mitochondrial electron transport chain which drives oxidative phosphorylation. The respiratory chain contains 3 multisubunit complexes succinate dehydrogenase (complex II, CII), ubiquinol-cytochrome c oxidoreductase (cytochrome b-c1 complex, complex III, CIII) and cytochrome c oxidase (complex IV, CIV), that cooperate to transfer electrons derived from NADH and succinate to molecular oxygen, creating an electrochemical gradient over the inner membrane that drives transmembrane transport and the ATP synthase. Cytochrome c oxidase is the component of the respiratory chain that catalyzes the reduction of oxygen to water. Electrons originating from reduced cytochrome c in the intermembrane space (IMS) are transferred via the dinuclear copper A center (CU(A)) of subunit 2 and heme A of subunit 1 to the active site in subunit 1, a binuclear center (BNC) formed by heme A3 and copper B (CU(B)). The BNC reduces molecular oxygen to 2 water molecules using 4 electrons from cytochrome c in the IMS and 4 protons from the mitochondrial matrix. The protein is Cytochrome c oxidase subunit 3 (MT-CO3) of Nanger dama (Dama gazelle).